The sequence spans 112 residues: Protein preY, mitochondrial (112 aa).

Residues 1–34 (MLSATCRRLAPALRRLRALSAVAGRFLQVPGARL) constitute a mitochondrion transit peptide. Positions 49–95 (HPALLQFLVCPLSKKPLRYEASTNELVNEELGIAYPIIDGIPNMIPQ) constitute a TRM112 domain.

The protein belongs to the PREY family. Interacts (via TRM112 domain) with NDUFAF5; the interaction is direct and stabilizes NDUFAF5 protein. Interacts with COQ5; the interaction is direct, stabilizes COQ5 protein and associates PYURF with COQ enzyme complex.

The protein localises to the mitochondrion. In terms of biological role, in mitochondria, S-adenosylmethionine-dependent methyltransferase chaperone that supports both coenzyme Q biosynthesis, by stabilizing its components, such as COQ5, and NADH:ubiquinone oxidoreductase complex (complex I, MT-ND1) assembly, by stabilizing complex I assembly factors, such as NDUFAF5. In Mus musculus (Mouse), this protein is Protein preY, mitochondrial (Pyurf).